Here is a 207-residue protein sequence, read N- to C-terminus: Large ribosomal subunit protein bL17m (207 aa).

Over residues 173 to 200 the composition is skewed to basic and acidic residues; sequence EKESEHARLKEDHEDEKTVKKDWKRGDP. A disordered region spans residues 173–207; the sequence is EKESEHARLKEDHEDEKTVKKDWKRGDPIPRPTYI.

This sequence belongs to the bacterial ribosomal protein bL17 family. In terms of assembly, component of the mitochondrial large ribosomal subunit (mt-LSU). Mature yeast 74S mitochondrial ribosomes consist of a small (37S) and a large (54S) subunit. The 37S small subunit contains a 15S ribosomal RNA (15S mt-rRNA) and at least 32 different proteins. The 54S large subunit contains a 21S rRNA (21S mt-rRNA) and at least 45 different proteins.

The protein localises to the mitochondrion. In terms of biological role, component of the mitochondrial ribosome (mitoribosome), a dedicated translation machinery responsible for the synthesis of mitochondrial genome-encoded proteins, including at least some of the essential transmembrane subunits of the mitochondrial respiratory chain. The mitoribosomes are attached to the mitochondrial inner membrane and translation products are cotranslationally integrated into the membrane. The protein is Large ribosomal subunit protein bL17m (mrpl8) of Schizosaccharomyces pombe (strain 972 / ATCC 24843) (Fission yeast).